We begin with the raw amino-acid sequence, 97 residues long: uncharacterized protein (97 aa).

It belongs to the mycobacterial PE family.

Functionally, part of the ESX-1 / type VII specialized secretion system (T7SS), which exports several proteins including EsxA and EsxB. Plays a role in DNA conjugation, in at least a donor strain. This is an uncharacterized protein from Mycolicibacterium smegmatis (strain ATCC 700084 / mc(2)155) (Mycobacterium smegmatis).